The primary structure comprises 275 residues: Large ribosomal subunit protein uL2 (275 aa).

The disordered stretch occupies residues 223–275 (VAMNPIDHPHGGGEGRTSGGRHPVSPWGVPTKGYKTRSNKRTDKYIVRRRNKK).

It belongs to the universal ribosomal protein uL2 family. Part of the 50S ribosomal subunit. Forms a bridge to the 30S subunit in the 70S ribosome.

One of the primary rRNA binding proteins. Required for association of the 30S and 50S subunits to form the 70S ribosome, for tRNA binding and peptide bond formation. It has been suggested to have peptidyltransferase activity; this is somewhat controversial. Makes several contacts with the 16S rRNA in the 70S ribosome. This Shewanella woodyi (strain ATCC 51908 / MS32) protein is Large ribosomal subunit protein uL2.